The chain runs to 1190 residues: MSKKLNTSVGGTPTNTLLNYFSKSPAFDKKKLTPSVKTDPDASKSEKENLQNQQPKVKDGKKEASKPAAKRKLPISDDEPASGQRKRKRIVQPESDSEPEMEVTKSEDDFSDCASDYEPDENEASDDSVSSGAEEVSPSENDMSVDSPTPKKSRKKSKILNNNNNNEPSSKKVKLESTIQLAEGATFQEKLKNLQSNAKQDASYDDIVTNTSNLDEPVVWPHQKLEFLQPDKIKDKEGRRPDHPDYDKSTLHVPEKFLNGLSPGVRQWWVLKSDNYDCVLFFKVGKFYELYHMDADVGVNELGFTYMRGEFAHSGFPEISFDKMSTILVDRGFKVARVEQTETPDMMTERCKRIKATKFDKVVAREICQITNRGTQVFGSQCKIGPNHQPNYMLAIVEKDEGTCSRYGVCFIDTSIGDFHLGEFEDDKNCSRLLTLVSHHMPVLFLNEKSALSQRTQQIVRTVLGGILKEPVPGNGKHACSAEKTLKLLAERYYAGPGSDDNWPLVLRTMQSDMDHLGLTPNDNYKLALKALGQCIFFIHKCKLEPKVLPMARYQLYVPPDQLADAKPAVASTLRRSHMVLDATTLSNLRIIGEEHSLLSTLDHCCTKFGKRLLHHWLCAPSCDVSVIKERQDAIGELIRMPTELQEVRALLAPMPDFERNLAQIHLFGNKQIKQMDHPDSRAILFEEKLYNKQKLQGFMAVLKGFNDLTKLPTMFHQCKTTLLKRITQLPESGGSFPDLSKELQYFATAFDHDAAAKTGVIAPQAGMDAEYDAAMDSIGEVEKRLKTYLVEQERHFGCRITYFGSDKKRYQLDVPESHASKANKSYTLEGQTKGKKPSRRYTTAETRALLKDMQHAEDTRNMVLKDLARRLFEKFSNHYDQWKQCIDCVANLDVLGSLAEYAGQQMVICVPELVSDADQPFIQLEEGYHPCANASTYIPNGLELGTASEAPLSLLTGPNMGGKSTLMREVGLLVIMAQIGAHIPAASCRLSLVDRIFTRLGAQDDILAGHSTFLVELNETSLILKHATCHSLVLLDELGRGTATYDGTAIAASVVNFLANLKCRTLFSTHYHNLIDFFHNDKRITLGHMACMVENEDNADPTQETVTFLYKYTAGACPKSYGFNAAKLAGMPQGIIKRAYELSKKVEAIALQRKITAKIVAATAGNEDTKKEKINALKDLLKQLKMCQV.

Residues 1 to 22 show a composition bias toward polar residues; sequence MSKKLNTSVGGTPTNTLLNYFS. Disordered regions lie at residues 1-174, 230-249, and 824-843; these read MSKK…KKVK, PDKIKDKEGRRPDHPDYDKS, and NKSYTLEGQTKGKKPSRRYT. Residue T7 is modified to Phosphothreonine. S8 is modified (phosphoserine). A phosphothreonine mark is found at T12, T14, and T16. S22 and S24 each carry phosphoserine. T33 is modified (phosphothreonine). Composition is skewed to basic and acidic residues over residues 38 to 49 and 56 to 65; these read TDPDASKSEKEN and KVKDGKKEAS. S95 and S97 each carry phosphoserine. The span at 109–126 shows a compositional bias: acidic residues; that stretch reads DFSDCASDYEPDENEASD. Residues 138–147 are compositionally biased toward polar residues; it reads PSENDMSVDS. The segment covering 159–168 has biased composition (low complexity); sequence ILNNNNNNEP. 958–965 provides a ligand contact to ATP; it reads GPNMGGKS.

This sequence belongs to the DNA mismatch repair MutS family. As to quaternary structure, heterodimer of Msh2/Spel and Msh6.

In terms of biological role, involved in post-replicative DNA-mismatch repair. In Drosophila melanogaster (Fruit fly), this protein is Probable DNA mismatch repair protein Msh6 (Msh6).